A 352-amino-acid chain; its full sequence is Membrane progestin receptor alpha (352 aa).

The Cytoplasmic segment spans residues 1–75; the sequence is MATVVMEQIG…FLTLFQRHNE (75 aa). Residues 76 to 96 traverse the membrane as a helical segment; sequence TLNVWTHLLAAFIILVKWQEI. Residues 97–110 lie on the Extracellular side of the membrane; sequence SETVDFLRDPHAQP. A helical membrane pass occupies residues 111–131; it reads LFIVLLAAFTYLSFSALAHLL. Residues 132-139 are Cytoplasmic-facing; the sequence is SAKSELSY. Residues 140–160 form a helical membrane-spanning segment; that stretch reads YTFYFLDYVGVAVYQYGSALA. At 161-175 the chain is on the extracellular side; sequence HYYYAIEKEWHTKVQ. A helical membrane pass occupies residues 176 to 196; it reads GLFLPAAAFLAWLTCFGCCYG. Residues 197–242 lie on the Cytoplasmic side of the membrane; sequence KYASPELPKVANKLFQVVPSALAYCLDISPVVHRIYSCYQEGCSDP. Residues 243 to 263 form a helical membrane-spanning segment; it reads VVAYHFYHVVFFLIGAYFFCC. Over 264–275 the chain is Extracellular; it reads PHPESLFPGKCD. A helical membrane pass occupies residues 276 to 296; sequence FIGQGHQLFHVFVVVCTLTQV. Residues 297–316 are Cytoplasmic-facing; sequence EALRTDFTERRPFYERLHGD. The helical transmembrane segment at 317–337 threads the bilayer; the sequence is LAHDAVALFIFTACCSALTAF. Over 338–352 the chain is Extracellular; that stretch reads YVRQRVRASLHEKGE.

This sequence belongs to the ADIPOR family. In terms of tissue distribution, strongly expressed in ovary and brain; lower expression in testis and pituitary. Not detected in heart, kidney, spleen, intestine, gill and muscle.

The protein resides in the cell membrane. Its function is as follows. Steroid membrane receptor. Binds progesterone, progestin and 17-hydroxyprogesterone in vitro. Capable of mediating progestin-induced oocyte maturation. The polypeptide is Membrane progestin receptor alpha (mpra) (Cynoscion nebulosus (Spotted seatrout)).